A 220-amino-acid polypeptide reads, in one-letter code: Guanylate kinase (220 aa).

Residues 15-194 (GLMLVISSPS…AFDAVQSIVK (180 aa)) form the Guanylate kinase-like domain. 22–29 (SPSGAGKS) is an ATP binding site.

It belongs to the guanylate kinase family.

Its subcellular location is the cytoplasm. The catalysed reaction is GMP + ATP = GDP + ADP. In terms of biological role, essential for recycling GMP and indirectly, cGMP. This chain is Guanylate kinase, found in Rhizobium etli (strain ATCC 51251 / DSM 11541 / JCM 21823 / NBRC 15573 / CFN 42).